The chain runs to 179 residues: NADH-quinone oxidoreductase subunit B 1 (179 aa).

[4Fe-4S] cluster contacts are provided by cysteine 38, cysteine 39, cysteine 104, and cysteine 133.

This sequence belongs to the complex I 20 kDa subunit family. As to quaternary structure, NDH-1 is composed of 14 different subunits. Subunits NuoB, C, D, E, F, and G constitute the peripheral sector of the complex. It depends on [4Fe-4S] cluster as a cofactor.

Its subcellular location is the cell membrane. It catalyses the reaction a quinone + NADH + 5 H(+)(in) = a quinol + NAD(+) + 4 H(+)(out). Its function is as follows. NDH-1 shuttles electrons from NADH, via FMN and iron-sulfur (Fe-S) centers, to quinones in the respiratory chain. The immediate electron acceptor for the enzyme in this species is believed to be ubiquinone. Couples the redox reaction to proton translocation (for every two electrons transferred, four hydrogen ions are translocated across the cytoplasmic membrane), and thus conserves the redox energy in a proton gradient. This chain is NADH-quinone oxidoreductase subunit B 1, found in Herpetosiphon aurantiacus (strain ATCC 23779 / DSM 785 / 114-95).